Consider the following 518-residue polypeptide: Glutamate--cysteine ligase (518 aa).

The protein belongs to the glutamate--cysteine ligase type 1 family. Type 1 subfamily.

The catalysed reaction is L-cysteine + L-glutamate + ATP = gamma-L-glutamyl-L-cysteine + ADP + phosphate + H(+). Its pathway is sulfur metabolism; glutathione biosynthesis; glutathione from L-cysteine and L-glutamate: step 1/2. The polypeptide is Glutamate--cysteine ligase (Klebsiella pneumoniae subsp. pneumoniae (strain ATCC 700721 / MGH 78578)).